The chain runs to 90 residues: MICAIYSSPKREQTYLYVEKRDNFSRVPEELLKSFGQPQYTMMISLADRKKLAGADIEKVKISLIEQGFYLQIPPPVENLMNAHLSQMEK.

The 85-residue stretch at 1-85 (MICAIYSSPK…PVENLMNAHL (85 aa)) folds into the YcgL domain.

This Photorhabdus laumondii subsp. laumondii (strain DSM 15139 / CIP 105565 / TT01) (Photorhabdus luminescens subsp. laumondii) protein is YcgL domain-containing protein plu2139.